We begin with the raw amino-acid sequence, 684 residues long: Threonine--tRNA ligase (684 aa).

One can recognise a TGS domain in the interval 1 to 66 (MSTAASPAPA…DADVEVVPVP (66 aa)). The catalytic stretch occupies residues 261 to 567 (DHRKLGVELD…LTEHYAGAFP (307 aa)). Cysteine 366, histidine 417, and histidine 544 together coordinate Zn(2+).

It belongs to the class-II aminoacyl-tRNA synthetase family. In terms of assembly, homodimer. Zn(2+) is required as a cofactor.

It is found in the cytoplasm. The catalysed reaction is tRNA(Thr) + L-threonine + ATP = L-threonyl-tRNA(Thr) + AMP + diphosphate + H(+). Catalyzes the attachment of threonine to tRNA(Thr) in a two-step reaction: L-threonine is first activated by ATP to form Thr-AMP and then transferred to the acceptor end of tRNA(Thr). Also edits incorrectly charged L-seryl-tRNA(Thr). This is Threonine--tRNA ligase from Mycobacterium sp. (strain KMS).